A 455-amino-acid polypeptide reads, in one-letter code: Bifunctional protein GlmU (455 aa).

The interval 1-226 is pyrophosphorylase; that stretch reads MGLSVVILAA…EFEILGVNDR (226 aa). Residues 8–11, K22, Q73, 78–79, 99–101, G136, E151, N166, and N224 each bind UDP-N-acetyl-alpha-D-glucosamine; these read LAAG, GT, and YGD. A Mg(2+)-binding site is contributed by D101. N224 provides a ligand contact to Mg(2+). Residues 227 to 247 form a linker region; it reads TQLASLERVWQRNVAEKIMAK. The segment at 248 to 455 is N-acetyltransferase; that stretch reads GVSIADPNRF…WQRPVKKTDK (208 aa). UDP-N-acetyl-alpha-D-glucosamine is bound by residues R330 and K348. Residue H360 is the Proton acceptor of the active site. Y363 and N374 together coordinate UDP-N-acetyl-alpha-D-glucosamine. Acetyl-CoA contacts are provided by residues A377, 383–384, S402, A420, and R437; that span reads NY.

The protein in the N-terminal section; belongs to the N-acetylglucosamine-1-phosphate uridyltransferase family. In the C-terminal section; belongs to the transferase hexapeptide repeat family. As to quaternary structure, homotrimer. It depends on Mg(2+) as a cofactor.

Its subcellular location is the cytoplasm. It catalyses the reaction alpha-D-glucosamine 1-phosphate + acetyl-CoA = N-acetyl-alpha-D-glucosamine 1-phosphate + CoA + H(+). The enzyme catalyses N-acetyl-alpha-D-glucosamine 1-phosphate + UTP + H(+) = UDP-N-acetyl-alpha-D-glucosamine + diphosphate. It functions in the pathway nucleotide-sugar biosynthesis; UDP-N-acetyl-alpha-D-glucosamine biosynthesis; N-acetyl-alpha-D-glucosamine 1-phosphate from alpha-D-glucosamine 6-phosphate (route II): step 2/2. Its pathway is nucleotide-sugar biosynthesis; UDP-N-acetyl-alpha-D-glucosamine biosynthesis; UDP-N-acetyl-alpha-D-glucosamine from N-acetyl-alpha-D-glucosamine 1-phosphate: step 1/1. It participates in bacterial outer membrane biogenesis; LPS lipid A biosynthesis. In terms of biological role, catalyzes the last two sequential reactions in the de novo biosynthetic pathway for UDP-N-acetylglucosamine (UDP-GlcNAc). The C-terminal domain catalyzes the transfer of acetyl group from acetyl coenzyme A to glucosamine-1-phosphate (GlcN-1-P) to produce N-acetylglucosamine-1-phosphate (GlcNAc-1-P), which is converted into UDP-GlcNAc by the transfer of uridine 5-monophosphate (from uridine 5-triphosphate), a reaction catalyzed by the N-terminal domain. The polypeptide is Bifunctional protein GlmU (Francisella tularensis subsp. novicida (strain U112)).